Consider the following 379-residue polypeptide: 1-deoxy-D-xylulose 5-phosphate reductoisomerase (379 aa).

Residues T10, G11, S12, I13, N39, and N121 each contribute to the NADPH site. K122 contributes to the 1-deoxy-D-xylulose 5-phosphate binding site. An NADPH-binding site is contributed by E123. D147 contributes to the Mn(2+) binding site. 4 residues coordinate 1-deoxy-D-xylulose 5-phosphate: S148, E149, S173, and H196. A Mn(2+)-binding site is contributed by E149. NADPH is bound at residue G202. 4 residues coordinate 1-deoxy-D-xylulose 5-phosphate: S209, N214, K215, and E218. E218 serves as a coordination point for Mn(2+).

It belongs to the DXR family. Mg(2+) is required as a cofactor. The cofactor is Mn(2+).

The enzyme catalyses 2-C-methyl-D-erythritol 4-phosphate + NADP(+) = 1-deoxy-D-xylulose 5-phosphate + NADPH + H(+). It participates in isoprenoid biosynthesis; isopentenyl diphosphate biosynthesis via DXP pathway; isopentenyl diphosphate from 1-deoxy-D-xylulose 5-phosphate: step 1/6. Functionally, catalyzes the NADPH-dependent rearrangement and reduction of 1-deoxy-D-xylulose-5-phosphate (DXP) to 2-C-methyl-D-erythritol 4-phosphate (MEP). The polypeptide is 1-deoxy-D-xylulose 5-phosphate reductoisomerase (Chlamydia caviae (strain ATCC VR-813 / DSM 19441 / 03DC25 / GPIC) (Chlamydophila caviae)).